An 86-amino-acid polypeptide reads, in one-letter code: Small ribosomal subunit protein bS20 (86 aa).

A compositionally biased stretch (basic and acidic residues) spans 1-16 (MANIKSQEKRIRTNER). The tract at residues 1 to 25 (MANIKSQEKRIRTNERRRLRNQSVK) is disordered.

Belongs to the bacterial ribosomal protein bS20 family.

In terms of biological role, binds directly to 16S ribosomal RNA. This is Small ribosomal subunit protein bS20 from Mycobacterium sp. (strain JLS).